The chain runs to 27 residues: Secretin (27 aa).

Position 27 is a valine amide (Val27).

Belongs to the glucagon family.

Its subcellular location is the secreted. In terms of biological role, hormone involved in different processes, such as regulation of the pH of the duodenal content, food intake and water homeostasis. Exerts its biological effects by binding to secretin receptor (SCTR), a G-protein coupled receptor expressed in the basolateral domain of several cells. Acts as a key gastrointestinal hormone by regulating the pH of the duodenal content. Secreted by S cells of the duodenum in the crypts of Lieberkuehn and regulates the pH of the duodenum by (1) inhibiting the secretion of gastric acid from the parietal cells of the stomach and (2) stimulating the production of bicarbonate (NaHCO(3)) from the ductal cells of the pancreas. Production of bicarbonate is essential to neutralize the pH and ensure no damage is done to the small intestine by the gastric acid. In addition to regulating the pH of the duodenal content, plays a central role in diet induced thermogenesis: acts as a non-sympathetic brown fat (BAT) activator mediating prandial thermogenesis, which consequentially induces satiation. Mechanistically, secretin released by the gut after a meal binds to secretin receptor (SCTR) in brown adipocytes, activating brown fat thermogenesis by stimulating lipolysis, which is sensed in the brain and promotes satiation. Also able to stimulate lipolysis in white adipocytes. Also plays an important role in cellular osmoregulation: released into the systemic circulation in response to hyperosmolality and acts at different levels in the hypothalamus, pituitary and kidney to regulate water homeostasis. Also plays a role in the central nervous system, possibly by acting as a neuropeptide hormone: required for hippocampal synaptic function and neural progenitor cells maintenance. The chain is Secretin from Canis lupus familiaris (Dog).